Here is a 129-residue protein sequence, read N- to C-terminus: Large ribosomal subunit protein bL12 (129 aa).

This sequence belongs to the bacterial ribosomal protein bL12 family. As to quaternary structure, homodimer. Part of the ribosomal stalk of the 50S ribosomal subunit. Forms a multimeric L10(L12)X complex, where L10 forms an elongated spine to which 2 to 4 L12 dimers bind in a sequential fashion. Binds GTP-bound translation factors.

Functionally, forms part of the ribosomal stalk which helps the ribosome interact with GTP-bound translation factors. Is thus essential for accurate translation. This is Large ribosomal subunit protein bL12 from Solidesulfovibrio magneticus (strain ATCC 700980 / DSM 13731 / RS-1) (Desulfovibrio magneticus).